The following is a 1381-amino-acid chain: Hepatocyte growth factor receptor (1381 aa).

The N-terminal stretch at 1-24 is a signal peptide; that stretch reads MKAPAVLAPGILVLLFTLVQKSKG. At 25 to 932 the chain is on the extracellular side; it reads ECKEALVKST…VIVQPDQNFT (908 aa). One can recognise a Sema domain in the interval 27–515; it reads KEALVKSTMN…TGKKITKIPL (489 aa). The N-linked (GlcNAc...) asparagine glycan is linked to N45. 4 disulfide bridges follow: C95-C101, C98-C160, C133-C141, and C173-C176. N106 carries an N-linked (GlcNAc...) asparagine glycan. Residues N203 and N359 are each glycosylated (N-linked (GlcNAc...) asparagine). 2 disulfides stabilise this stretch: C299–C364 and C386–C398. N-linked (GlcNAc...) asparagine glycosylation is found at N400 and N406. Intrachain disulfides connect C520–C538, C526–C561, C529–C545, and C541–C551. 3 consecutive IPT/TIG domains span residues 563-655, 657-739, and 742-836; these read PTVY…FSYV, PVIT…FTYR, and PIVY…LIYV. O-linked (Man) threonine glycosylation occurs at T582. Residues N607 and N635 are each glycosylated (N-linked (GlcNAc...) asparagine). Residues T676 and T761 are each glycosylated (O-linked (Man) threonine). N-linked (GlcNAc...) asparagine glycans are attached at residues N785, N879, and N930. Residues 933-955 form a helical membrane-spanning segment; it reads GLIVGVVSISIILLLLLGLFLWL. Over 956–1381 the chain is Cytoplasmic; the sequence is KKRKQIKDLG…QDNVDGEGDT (426 aa). Phosphoserine is present on S966. T977 carries the post-translational modification Phosphothreonine. A phosphoserine mark is found at S990 and S997. Y1003 carries the post-translational modification Phosphotyrosine. The Protein kinase domain maps to 1078 to 1345; sequence VHFNEVIGRG…RISAIFSTFI (268 aa). ATP is bound by residues 1084 to 1092 and K1110; that span reads IGRGHFGCV. The Proton acceptor role is filled by D1204. The segment at 1212 to 1381 is interaction with RANBP9; that stretch reads LDEKFTVKVA…QDNVDGEGDT (170 aa). Y1230 carries the post-translational modification Phosphotyrosine. Y1234 and Y1235 each carry phosphotyrosine; by autocatalysis. T1289 carries the post-translational modification Phosphothreonine. An interaction with MUC20 region spans residues 1320–1359; it reads WHPRAELRPSFSELVSRISAIFSTFIGEHYVHVNATYVNV. Y1349 and Y1356 each carry phosphotyrosine; by autocatalysis. The residue at position 1365 (Y1365) is a Phosphotyrosine.

This sequence belongs to the protein kinase superfamily. Tyr protein kinase family. Heterodimer made of an alpha chain (50 kDa) and a beta chain (145 kDa) which are disulfide linked. Binds PLXNB1. Interacts when phosphorylated with downstream effectors including STAT3, PIK3R1, SRC, PCLG1, GRB2 and GAB1. Interacts with SPSB1, SPSB2 and SPSB4. Interacts with INPP5D/SHIP1. When phosphorylated at Tyr-1356, interacts with INPPL1/SHIP2. Interacts with RANBP9 and RANBP10, as well as SPSB1, SPSB2, SPSB3 and SPSB4. SPSB1 binding occurs in the presence and in the absence of HGF, however HGF treatment has a positive effect on this interaction. Interacts with MUC20; prevents interaction with GRB2 and suppresses hepatocyte growth factor-induced cell proliferation. Interacts with GRB10. Interacts with PTPN1 and PTPN2. Interacts with HSP90AA1 and HSP90AB1; the interaction suppresses MET kinase activity. Interacts with tensin TNS3. Interacts (when phosphorylated) with tensin TNS4 (via SH2 domain); the interaction increases MET protein stability by inhibiting MET endocytosis and subsequent lysosomal degradation. Post-translationally, autophosphorylated in response to ligand binding on Tyr-1234 and Tyr-1235 in the kinase domain leading to further phosphorylation of Tyr-1349 and Tyr-1356 in the C-terminal multifunctional docking site. Dephosphorylated by PTPRJ at Tyr-1349 and Tyr-1365. Dephosphorylated by PTPN1 and PTPN2. In terms of processing, ubiquitinated. Ubiquitination by CBL regulates the receptor stability and activity through proteasomal degradation. O-mannosylation of IPT/TIG domains by TMEM260 is required for protein maturation. O-mannosylated residues are composed of single mannose glycans that are not elongated or modified.

It is found in the membrane. The catalysed reaction is L-tyrosyl-[protein] + ATP = O-phospho-L-tyrosyl-[protein] + ADP + H(+). Its activity is regulated as follows. In its inactive state, the C-terminal tail interacts with the catalytic domain and inhibits the kinase activity. Upon ligand binding, the C-terminal tail is displaced and becomes phosphorylated, thus increasing the kinase activity. Receptor tyrosine kinase that transduces signals from the extracellular matrix into the cytoplasm by binding to hepatocyte growth factor/HGF ligand. Regulates many physiological processes including proliferation, scattering, morphogenesis and survival. Ligand binding at the cell surface induces autophosphorylation of MET on its intracellular domain that provides docking sites for downstream signaling molecules. Following activation by ligand, interacts with the PI3-kinase subunit PIK3R1, PLCG1, SRC, GRB2, STAT3 or the adapter GAB1. Recruitment of these downstream effectors by MET leads to the activation of several signaling cascades including the RAS-ERK, PI3 kinase-AKT, or PLCgamma-PKC. The RAS-ERK activation is associated with the morphogenetic effects while PI3K/AKT coordinates prosurvival effects. During embryonic development, MET signaling plays a role in gastrulation, development and migration of muscles and neuronal precursors, angiogenesis and kidney formation. In adults, participates in wound healing as well as organ regeneration and tissue remodeling. Also promotes differentiation and proliferation of hematopoietic cells. The protein is Hepatocyte growth factor receptor (MET) of Sus scrofa (Pig).